We begin with the raw amino-acid sequence, 594 residues long: UvrABC system protein C (594 aa).

Residues 14-91 (DQPGCYLMKD…IKKHDPKYNI (78 aa)) form the GIY-YIG domain. One can recognise a UVR domain in the interval 196–231 (KEVRSELETKMYEASEKLEFERAKELRDQIAHIDAI).

The protein belongs to the UvrC family. In terms of assembly, interacts with UvrB in an incision complex.

It localises to the cytoplasm. Functionally, the UvrABC repair system catalyzes the recognition and processing of DNA lesions. UvrC both incises the 5' and 3' sides of the lesion. The N-terminal half is responsible for the 3' incision and the C-terminal half is responsible for the 5' incision. In Bacillus cereus (strain Q1), this protein is UvrABC system protein C.